A 112-amino-acid polypeptide reads, in one-letter code: UPF0375 protein R05A10.4 (112 aa).

An N-terminal signal peptide occupies residues 1 to 19; the sequence is MNLSIFSAIIFSITIASSA. N-linked (GlcNAc...) asparagine glycosylation occurs at asparagine 59.

The protein belongs to the UPF0375 family.

It is found in the secreted. In Caenorhabditis elegans, this protein is UPF0375 protein R05A10.4.